A 1359-amino-acid polypeptide reads, in one-letter code: DNA-directed RNA polymerase subunit beta (1359 aa).

This sequence belongs to the RNA polymerase beta chain family. As to quaternary structure, the RNAP catalytic core consists of 2 alpha, 1 beta, 1 beta' and 1 omega subunit. When a sigma factor is associated with the core the holoenzyme is formed, which can initiate transcription.

It carries out the reaction RNA(n) + a ribonucleoside 5'-triphosphate = RNA(n+1) + diphosphate. Its function is as follows. DNA-dependent RNA polymerase catalyzes the transcription of DNA into RNA using the four ribonucleoside triphosphates as substrates. This chain is DNA-directed RNA polymerase subunit beta, found in Nitrosomonas eutropha (strain DSM 101675 / C91 / Nm57).